Consider the following 187-residue polypeptide: Frequenin-1 (187 aa).

Residue glycine 2 is the site of N-myristoyl glycine attachment. 4 EF-hand domains span residues glutamate 24–glycine 59, aspartate 60–glycine 95, asparagine 96–methionine 131, and threonine 143–isoleucine 178. Residues aspartate 73, asparagine 75, aspartate 77, serine 79, glutamate 84, aspartate 109, aspartate 111, aspartate 113, tyrosine 115, glutamate 120, aspartate 156, asparagine 158, aspartate 160, lysine 162, and glutamate 167 each contribute to the Ca(2+) site.

Belongs to the recoverin family. In terms of assembly, in contrast to Frq2, does not interact with ric8a. In terms of tissue distribution, enriched in synapses, such as the motor nerve endings at neuromuscular junctions. In the embryo, highly expressed in the ventral ganglia.

The protein localises to the cytoplasm. Ca(2+)-dependent modulation of synaptic efficacy. Also plays a role in axon terminal morphology. This is Frequenin-1 (Frq1) from Drosophila melanogaster (Fruit fly).